A 360-amino-acid polypeptide reads, in one-letter code: sn-glycerol-3-phosphate import ATP-binding protein UgpC (360 aa).

The ABC transporter domain maps to 4-235 (LSLKGVRKSY…PATTFVASFI (232 aa)). Residue 37-44 (GPSGCGKS) coordinates ATP.

Belongs to the ABC transporter superfamily. sn-glycerol-3-phosphate importer (TC 3.A.1.1.3) family. The complex is composed of two ATP-binding proteins (UgpC), two transmembrane proteins (UgpA and UgpE) and a solute-binding protein (UgpB).

The protein localises to the cell inner membrane. The catalysed reaction is sn-glycerol 3-phosphate(out) + ATP + H2O = sn-glycerol 3-phosphate(in) + ADP + phosphate + H(+). In terms of biological role, part of the ABC transporter complex UgpBAEC involved in sn-glycerol-3-phosphate (G3P) import. Responsible for energy coupling to the transport system. This Burkholderia pseudomallei (strain 1710b) protein is sn-glycerol-3-phosphate import ATP-binding protein UgpC.